The sequence spans 547 residues: CTP synthase (547 aa).

The segment at 1–265 (MARFIFITGG…DQAVLDAFQI (265 aa)) is amidoligase domain. Residue Ser-13 coordinates CTP. Ser-13 contributes to the UTP binding site. ATP contacts are provided by residues 14–19 (SLGKGL) and Asp-71. Residues Asp-71 and Glu-139 each coordinate Mg(2+). Residues 146-148 (DIE), 186-191 (KTKPTQ), and Lys-222 contribute to the CTP site. Residues 186–191 (KTKPTQ) and Lys-222 each bind UTP. One can recognise a Glutamine amidotransferase type-1 domain in the interval 291–546 (KIAIVGKYVQ…VRAAKESSRL (256 aa)). Residue Gly-353 participates in L-glutamine binding. Cys-380 acts as the Nucleophile; for glutamine hydrolysis in catalysis. Residues 381–384 (LGMQ), Glu-404, and Arg-474 contribute to the L-glutamine site. Residues His-519 and Glu-521 contribute to the active site.

This sequence belongs to the CTP synthase family. As to quaternary structure, homotetramer.

It carries out the reaction UTP + L-glutamine + ATP + H2O = CTP + L-glutamate + ADP + phosphate + 2 H(+). The catalysed reaction is L-glutamine + H2O = L-glutamate + NH4(+). The enzyme catalyses UTP + NH4(+) + ATP = CTP + ADP + phosphate + 2 H(+). It functions in the pathway pyrimidine metabolism; CTP biosynthesis via de novo pathway; CTP from UDP: step 2/2. Allosterically activated by GTP, when glutamine is the substrate; GTP has no effect on the reaction when ammonia is the substrate. The allosteric effector GTP functions by stabilizing the protein conformation that binds the tetrahedral intermediate(s) formed during glutamine hydrolysis. Inhibited by the product CTP, via allosteric rather than competitive inhibition. Catalyzes the ATP-dependent amination of UTP to CTP with either L-glutamine or ammonia as the source of nitrogen. Regulates intracellular CTP levels through interactions with the four ribonucleotide triphosphates. The chain is CTP synthase from Ruegeria pomeroyi (strain ATCC 700808 / DSM 15171 / DSS-3) (Silicibacter pomeroyi).